Here is a 421-residue protein sequence, read N- to C-terminus: MSRTVMERIEYEMHTPDPKADPDKLHFVQIDEAKCIGCDTCSQYCPTAAIFGEMGEPHSIPHIEACINCGQCLTHCPENAIYEAQSWVPEVEKKLKDGKVKCIAMPAPAVRYALGDAFGMPVGSVTTGKMLAALQKLGFAHCWDTEFTADVTIWEEGSEFVERLTKKSDMPLPQFTSCCPGWQKYAETYYPELLPHFSTCKSPIGMNGALAKTYGAERMKYDPKQVYTVSIMPCIAKKYEGLRPELKSSGMRDIDATLTTRELAYMIKKAGIDFAKLPDGKRDSLMGESTGGATIFGVTGGVMEAALRFAYEAVTGKKPDSWDFKAVRGLDGIKEATVNVGGTDVKVAVVHGAKRFKQVCDDVKAGKSPYHFIEYMACPGGCVCGGGQPVMPGVLEAMDRTTTRLYAGLKKRLAMASANKA.

4Fe-4S ferredoxin-type domains are found at residues 26 to 57 (HFVQ…MGEP) and 59 to 86 (SIPH…EAQS). Residues C35, C38, C41, C45, C66, C69, C72, C76, C179, C234, C378, and C382 each contribute to the [4Fe-4S] cluster site. C382 is a Fe(2+) binding site.

Heterodimer of a large and a small subunit. [4Fe-4S] cluster serves as cofactor. It depends on Fe(2+) as a cofactor.

The protein resides in the periplasm. The enzyme catalyses H2 + 2 oxidized [2Fe-2S]-[ferredoxin] = 2 reduced [2Fe-2S]-[ferredoxin] + 2 H(+). Its function is as follows. May be involved in hydrogen uptake for the reduction of sulfate to hydrogen sulfide in an electron transport chain. Cytochrome c3 is likely to be the physiological electron carrier for the enzyme. This chain is Periplasmic [Fe] hydrogenase large subunit (hydA), found in Nitratidesulfovibrio vulgaris (strain ATCC 29579 / DSM 644 / CCUG 34227 / NCIMB 8303 / VKM B-1760 / Hildenborough) (Desulfovibrio vulgaris).